The sequence spans 32 residues: Conotoxin sr7a (32 aa).

Cystine bridges form between C1/C17, C8/C21, and C16/C31. The residue at position 32 (S32) is a Serine amide.

In terms of tissue distribution, expressed by the venom duct.

It localises to the secreted. Elicits hyperactivity when injected intracranially into mice and produces paralysis when injected into the pedal muscle of freshwater snails, Pomacea paludosa, but it has no apparent effect after intramuscular injection into the limpet Patella opea or the freshwater fish Lebistes reticulatus. The protein is Conotoxin sr7a of Conus spurius (Alphabet cone).